The sequence spans 224 residues: MGRGRYPARLKVTVPPPEIAARYYRSWPAHELYHHPDRFPLLNAESLFGRNAPLTLELGCATGEYICTLATAQPDACFVGVDIVAKPLYRAVERAVELGLENIIFLQADARLLYQRIPDCVLTTIILHFPPPLLRNRQRNQLLVSAQMLGCAERSLVPGGYLSFLTDHPDLFSLMQELLPAFPRLRGLPASPSELAVFESHYHRRWAARGREIRGLRIERIAEE.

Residues Glu-57, Asp-82, and Asp-109 each contribute to the S-adenosyl-L-methionine site. Residue Asp-167 coordinates substrate.

This sequence belongs to the class I-like SAM-binding methyltransferase superfamily. TrmB family.

The catalysed reaction is guanosine(46) in tRNA + S-adenosyl-L-methionine = N(7)-methylguanosine(46) in tRNA + S-adenosyl-L-homocysteine. It functions in the pathway tRNA modification; N(7)-methylguanine-tRNA biosynthesis. Its function is as follows. Catalyzes the formation of N(7)-methylguanine at position 46 (m7G46) in tRNA. The chain is tRNA (guanine-N(7)-)-methyltransferase from Chloroflexus aggregans (strain MD-66 / DSM 9485).